We begin with the raw amino-acid sequence, 423 residues long: MRAPGSGRLALPLLLLAVVALAEGDAKGLKEGETPGNFMEDEQWLSSISQYSGKIKHWNRFRDEVEDDYIKSWEDNQQGDEALDTTKDPCQKVKCSRHKVCVAQGYQRAMCISRKKLEHRIKQPSLKLHGGKDSVCKPCHMAQLASVCGSDGHTYSSVCKLEQQACLSSKQLAVRCEGPCPCPTEQSTASTTDSKSETCTGQDLADLGDRLRDWFQLLRENSKQNGSANSATNPAGLDKSLGASCKDSIGWMFSKLDTSGDLFLDQTELAAINLDKYEVCIRPFFNSCDTYKDGRVSTAEWCFCFWREKPPCLAELERTQIQEAAKKKPGVFIPSCDEDGYYRKMQCDQSRGDCWCVDQLGLELTGTRMHGTPDCDDIVGFSGDFGSGVGWEDEEEKETEEAGEEAEEEEGEAGEADDGGYIW.

The N-terminal stretch at 1–22 (MRAPGSGRLALPLLLLAVVALA) is a signal peptide. Serine 72 is modified (phosphoserine). Disulfide bonds link cysteine 90/cysteine 101, cysteine 95/cysteine 111, cysteine 136/cysteine 166, cysteine 139/cysteine 159, and cysteine 148/cysteine 180. Residues 130 to 182 (GGKDSVCKPCHMAQLASVCGSDGHTYSSVCKLEQQACLSSKQLAVRCEGPCPC) enclose the Kazal-like domain. Asparagine 225 is a glycosylation site (N-linked (GlcNAc...) asparagine). A Thyroglobulin type-1 domain is found at 309–375 (KPPCLAELER…GTRMHGTPDC (67 aa)). Disulfide bonds link cysteine 312/cysteine 336, cysteine 347/cysteine 354, and cysteine 356/cysteine 375. Residues serine 382 and serine 387 are each glycosylated (O-linked (Xyl...) (glycosaminoglycan) serine). The tract at residues 387-423 (SGVGWEDEEEKETEEAGEEAEEEEGEAGEADDGGYIW) is disordered. Residues 391–423 (WEDEEEKETEEAGEEAEEEEGEAGEADDGGYIW) show a composition bias toward acidic residues.

In terms of processing, O-glycosylated; contains chondroitin sulfate and heparan sulfate. Brain specific.

The protein resides in the secreted. Its subcellular location is the extracellular space. It is found in the extracellular matrix. Its function is as follows. May participate in diverse steps of neurogenesis. Binds calcium. This Mus musculus (Mouse) protein is Testican-2 (Spock2).